Consider the following 84-residue polypeptide: Putative ribosomal RNA large subunit methyltransferase H 2 (84 aa).

S-adenosyl-L-methionine is bound by residues G33 and 52–57 (FSKMTF).

The protein belongs to the RNA methyltransferase RlmH family. Homodimer.

The protein resides in the cytoplasm. It catalyses the reaction pseudouridine(1915) in 23S rRNA + S-adenosyl-L-methionine = N(3)-methylpseudouridine(1915) in 23S rRNA + S-adenosyl-L-homocysteine + H(+). In terms of biological role, specifically methylates the pseudouridine at position 1915 (m3Psi1915) in 23S rRNA. The sequence is that of Putative ribosomal RNA large subunit methyltransferase H 2 (rlmH2) from Clostridium perfringens (strain SM101 / Type A).